The chain runs to 446 residues: Glycerol-3-phosphate acyltransferase 3 (446 aa).

Helical transmembrane passes span 11–31 (IFII…MFGS), 146–166 (LRVT…LLPL), and 168–188 (ITLA…VGQL). Residues 236–241 (HTSPID) carry the HXXXXD motif motif.

Belongs to the 1-acyl-sn-glycerol-3-phosphate acyltransferase family.

It is found in the endoplasmic reticulum membrane. The catalysed reaction is sn-glycerol 3-phosphate + an acyl-CoA = a 1-acyl-sn-glycero-3-phosphate + CoA. It carries out the reaction a 1-acyl-sn-glycero-3-phosphate + an acyl-CoA = a 1,2-diacyl-sn-glycero-3-phosphate + CoA. It catalyses the reaction dodecanoyl-CoA + sn-glycerol 3-phosphate = 1-dodecanoyl-sn-glycerol 3-phosphate + CoA. The enzyme catalyses sn-glycerol 3-phosphate + hexadecanoyl-CoA = 1-hexadecanoyl-sn-glycero-3-phosphate + CoA. The catalysed reaction is sn-glycerol 3-phosphate + (9Z)-octadecenoyl-CoA = 1-(9Z-octadecenoyl)-sn-glycero-3-phosphate + CoA. It carries out the reaction (9Z,12Z)-octadecadienoyl-CoA + sn-glycerol 3-phosphate = 1-(9Z,12Z)-octadecadienoyl-sn-glycero-3-phosphate + CoA. It catalyses the reaction 1-tetradecanoyl-sn-glycerol 3-phosphate + (9Z)-octadecenoyl-CoA = 1-tetradecanoyl-2-(9Z)-octadecenoyl-sn-glycero-3-phosphate + CoA. The enzyme catalyses 1-hexadecanoyl-sn-glycero-3-phosphate + (9Z)-octadecenoyl-CoA = 1-hexadecanoyl-2-(9Z-octadecenoyl)-sn-glycero-3-phosphate + CoA. The catalysed reaction is 1-(9Z-octadecenoyl)-sn-glycero-3-phosphate + (9Z)-octadecenoyl-CoA = 1,2-di-(9Z-octadecenoyl)-sn-glycero-3-phosphate + CoA. It carries out the reaction 1-(6Z,9Z,12Z-octadecatrienoyl)-sn-glycero-3-phosphate + (9Z)-octadecenoyl-CoA = (6Z,9Z,12Z)-octadecatrienoyl-2-(9Z)-octadecenoyl-sn-glycero-3-phosphate + CoA. It catalyses the reaction 1-(9Z,12Z,15Z)-octadecatrienoyl-sn-glycero-3-phosphate + (9Z)-octadecenoyl-CoA = 1-(9Z,12Z,15Z)-octadecatrienoyl-2-(9Z)-octadecenoyl-sn-glycero-3-phosphate + CoA. The enzyme catalyses 1-(9Z-octadecenoyl)-sn-glycero-3-phosphate + tetradecanoyl-CoA = 1-(9Z)-octadecenoyl-2-tetradecanoyl-sn-glycero-3-phosphate + CoA. The catalysed reaction is 1-(9Z-octadecenoyl)-sn-glycero-3-phosphate + hexadecanoyl-CoA = 1-(9Z)-octadecenoyl-2-hexadecanoyl-sn-glycero-3-phosphate + CoA. It carries out the reaction 1-(9Z-octadecenoyl)-sn-glycero-3-phosphate + octadecanoyl-CoA = 1-(9Z-octadecenoyl)-2-octadecanoyl-sn-glycero-3-phosphate + CoA. It catalyses the reaction 1-(9Z-octadecenoyl)-sn-glycero-3-phosphate + (9Z,12Z)-octadecadienoyl-CoA = 1-(9Z)-octadecenoyl-2-(9Z,12Z)-octadecadienoyl-sn-glycero-3-phosphate + CoA. The enzyme catalyses 1-(5Z,8Z,11Z,14Z-eicosatetraenoyl)-sn-glycero-3-phosphate + (9Z)-octadecenoyl-CoA = 1-(5Z,8Z,11Z,14Z)-eicosatetraenoyl-2-(9Z)-octadecenoyl-sn-glycero-3-phosphate + CoA. The protein operates within glycerolipid metabolism; triacylglycerol biosynthesis. It participates in phospholipid metabolism; CDP-diacylglycerol biosynthesis; CDP-diacylglycerol from sn-glycerol 3-phosphate: step 1/3. Its function is as follows. Converts glycerol-3-phosphate to 1-acyl-sn-glycerol-3-phosphate (lysophosphatidic acid or LPA) by incorporating an acyl moiety at the sn-1 position of the glycerol backbone. Also converts LPA into 1,2-diacyl-sn-glycerol-3-phosphate (phosphatidic acid or PA) by incorporating an acyl moiety at the sn-2 position of the glycerol backbone. Protects cells against lipotoxicity. The sequence is that of Glycerol-3-phosphate acyltransferase 3 from Xenopus laevis (African clawed frog).